The sequence spans 716 residues: Fatty acid oxidation complex subunit alpha (716 aa).

Residues 1 to 189 form an enoyl-CoA hydratase/isomerase region; the sequence is MIYQSPTIQV…KVGAIDAVVA (189 aa). Residue Asp-296 coordinates substrate. Residues 311-716 form a 3-hydroxyacyl-CoA dehydrogenase region; sequence KNIDTAAVLG…AANNGSYYQS (406 aa). Residues Met-324, Asp-343, 400–402, Lys-407, and Ser-429 contribute to the NAD(+) site; that span reads VVE. His-450 (for 3-hydroxyacyl-CoA dehydrogenase activity) is an active-site residue. Asn-453 is a binding site for NAD(+). Asn-500 is a substrate binding site.

This sequence in the N-terminal section; belongs to the enoyl-CoA hydratase/isomerase family. It in the C-terminal section; belongs to the 3-hydroxyacyl-CoA dehydrogenase family. In terms of assembly, heterotetramer of two alpha chains (FadB) and two beta chains (FadA).

The enzyme catalyses a (3S)-3-hydroxyacyl-CoA + NAD(+) = a 3-oxoacyl-CoA + NADH + H(+). It carries out the reaction a (3S)-3-hydroxyacyl-CoA = a (2E)-enoyl-CoA + H2O. It catalyses the reaction a 4-saturated-(3S)-3-hydroxyacyl-CoA = a (3E)-enoyl-CoA + H2O. The catalysed reaction is (3S)-3-hydroxybutanoyl-CoA = (3R)-3-hydroxybutanoyl-CoA. The enzyme catalyses a (3Z)-enoyl-CoA = a 4-saturated (2E)-enoyl-CoA. It carries out the reaction a (3E)-enoyl-CoA = a 4-saturated (2E)-enoyl-CoA. Its pathway is lipid metabolism; fatty acid beta-oxidation. Its function is as follows. Involved in the aerobic and anaerobic degradation of long-chain fatty acids via beta-oxidation cycle. Catalyzes the formation of 3-oxoacyl-CoA from enoyl-CoA via L-3-hydroxyacyl-CoA. It can also use D-3-hydroxyacyl-CoA and cis-3-enoyl-CoA as substrate. The protein is Fatty acid oxidation complex subunit alpha of Shewanella sediminis (strain HAW-EB3).